Consider the following 86-residue polypeptide: Cell division topological specificity factor (86 aa).

It belongs to the MinE family.

In terms of biological role, prevents the cell division inhibition by proteins MinC and MinD at internal division sites while permitting inhibition at polar sites. This ensures cell division at the proper site by restricting the formation of a division septum at the midpoint of the long axis of the cell. This Parasynechococcus marenigrum (strain WH8102) protein is Cell division topological specificity factor.